An 85-amino-acid polypeptide reads, in one-letter code: Conotoxin Cap15a (85 aa).

An N-terminal signal peptide occupies residues 1 to 23; the sequence is MEKLTFLILVATVLLTIHVLVQS. The propeptide occupies 24–49; it reads VGDKHLKRRPKQYATKHLSALMRGHR. Glutamine 50 carries the pyrrolidone carboxylic acid modification.

Belongs to the conotoxin O2 superfamily. Contains 4 disulfide bonds. In terms of tissue distribution, expressed by the venom duct.

It is found in the secreted. In Conus capitaneus (Captain cone), this protein is Conotoxin Cap15a.